The primary structure comprises 105 residues: Ribonuclease P protein component 4 (105 aa).

C63, C66, C89, and C92 together coordinate Zn(2+).

This sequence belongs to the eukaryotic/archaeal RNase P protein component 4 family. As to quaternary structure, consists of a catalytic RNA component and at least 4-5 protein subunits. Requires Zn(2+) as cofactor.

Its subcellular location is the cytoplasm. The enzyme catalyses Endonucleolytic cleavage of RNA, removing 5'-extranucleotides from tRNA precursor.. In terms of biological role, part of ribonuclease P, a protein complex that generates mature tRNA molecules by cleaving their 5'-ends. In Methanoculleus marisnigri (strain ATCC 35101 / DSM 1498 / JR1), this protein is Ribonuclease P protein component 4.